The primary structure comprises 308 residues: Protein translocase subunit SecF (308 aa).

6 helical membrane-spanning segments follow: residues 28-48 (SIIL…NFGI), 140-160 (IEAG…YIWV), 164-184 (WYFG…ALGF), 194-214 (LSTI…SVVI), 246-266 (ILTV…GGEA), and 272-292 (VLVF…SAPI).

Belongs to the SecD/SecF family. SecF subfamily. In terms of assembly, forms a complex with SecD. Part of the essential Sec protein translocation apparatus which comprises SecA, SecYEG and auxiliary proteins SecDF-YajC and YidC.

It is found in the cell inner membrane. Its function is as follows. Part of the Sec protein translocase complex. Interacts with the SecYEG preprotein conducting channel. SecDF uses the proton motive force (PMF) to complete protein translocation after the ATP-dependent function of SecA. The sequence is that of Protein translocase subunit SecF from Rickettsia conorii (strain ATCC VR-613 / Malish 7).